The sequence spans 169 residues: MAPPWVPAMGFTLAPSLGCFVGSRFVHGEGLRWYAGLQKPSWHPPHWVLGPVWGTLYSAMGYGSYLVWKELGGFTEKAVVPLGLYTGQLALNWAWPPIFFGARQMGWALVDLLLVSGAAAATTVAWYQVSPLAARLLYPYLAWLAFTTTLNYCVWRDNHGWRGGRRLPE.

At 2–5 (APPW) the chain is on the mitochondrial intermembrane side. A helical membrane pass occupies residues 6–26 (VPAMGFTLAPSLGCFVGSRFV). Over 27–46 (HGEGLRWYAGLQKPSWHPPH) the chain is Cytoplasmic. Residues 47–67 (WVLGPVWGTLYSAMGYGSYLV) form a helical membrane-spanning segment. The Mitochondrial intermembrane segment spans residues 68 to 79 (WKELGGFTEKAV). The helical transmembrane segment at 80–100 (VPLGLYTGQLALNWAWPPIFF) threads the bilayer. The Cytoplasmic portion of the chain corresponds to 101-105 (GARQM). The helical transmembrane segment at 106–126 (GWALVDLLLVSGAAAATTVAW) threads the bilayer. Residues 127-134 (YQVSPLAA) lie on the Mitochondrial intermembrane side of the membrane. The chain crosses the membrane as a helical span at residues 135–155 (RLLYPYLAWLAFTTTLNYCVW). The Cytoplasmic portion of the chain corresponds to 156–169 (RDNHGWRGGRRLPE).

Belongs to the TspO/BZRP family. Interacts with TSPOAP1. May interact with STAR. Interacts with MOST-1. Interacts with TMEM97. Forms a complex with TMEM97 and PGRMC1; the interaction occurs in MIA PaCa-2 cells but not in MCF7 cells. In terms of tissue distribution, found in many tissue types. Expressed at the highest levels under normal conditions in tissues that synthesize steroids.

It localises to the mitochondrion membrane. Functionally, can bind protoporphyrin IX and may play a role in the transport of porphyrins and heme. Promotes the transport of cholesterol across mitochondrial membranes and may play a role in lipid metabolism, but its precise physiological role is controversial. It is apparently not required for steroid hormone biosynthesis. Was initially identified as peripheral-type benzodiazepine receptor; can also bind isoquinoline carboxamides. The protein is Translocator protein (TSPO) of Homo sapiens (Human).